Consider the following 308-residue polypeptide: Porphobilinogen deaminase (308 aa).

S-(dipyrrolylmethanemethyl)cysteine is present on Cys-241.

The protein belongs to the HMBS family. In terms of assembly, monomer. The cofactor is dipyrromethane.

The catalysed reaction is 4 porphobilinogen + H2O = hydroxymethylbilane + 4 NH4(+). Its pathway is porphyrin-containing compound metabolism; protoporphyrin-IX biosynthesis; coproporphyrinogen-III from 5-aminolevulinate: step 2/4. Functionally, tetrapolymerization of the monopyrrole PBG into the hydroxymethylbilane pre-uroporphyrinogen in several discrete steps. The polypeptide is Porphobilinogen deaminase (Staphylococcus aureus (strain MRSA252)).